Reading from the N-terminus, the 552-residue chain is Chaperonin GroEL (552 aa).

Residues 29–32, Lys-50, 86–90, Gly-420, and Asp-501 contribute to the ATP site; these read TAGP and DGTTT.

It belongs to the chaperonin (HSP60) family. Forms a cylinder of 14 subunits composed of two heptameric rings stacked back-to-back. Interacts with the co-chaperonin GroES.

It is found in the cytoplasm. The enzyme catalyses ATP + H2O + a folded polypeptide = ADP + phosphate + an unfolded polypeptide.. Together with its co-chaperonin GroES, plays an essential role in assisting protein folding. The GroEL-GroES system forms a nano-cage that allows encapsulation of the non-native substrate proteins and provides a physical environment optimized to promote and accelerate protein folding. This chain is Chaperonin GroEL, found in Wolbachia pipientis subsp. Culex pipiens (strain wPip).